The sequence spans 311 residues: HPr kinase/phosphorylase (311 aa).

Catalysis depends on residues histidine 138 and lysine 159. 153-160 lines the ATP pocket; it reads GDSGIGKS. Residue serine 160 participates in Mg(2+) binding. Aspartate 177 functions as the Proton acceptor; for phosphorylation activity. Proton donor; for dephosphorylation activity in the catalytic mechanism. An important for the catalytic mechanism of both phosphorylation and dephosphorylation region spans residues 201-210; that stretch reads IEIRGVGIID. Position 202 (glutamate 202) interacts with Mg(2+). Arginine 243 is an active-site residue. Positions 264 to 269 are important for the catalytic mechanism of dephosphorylation; it reads PVKTGR.

The protein belongs to the HPrK/P family. Homohexamer. Mg(2+) serves as cofactor.

The enzyme catalyses [HPr protein]-L-serine + ATP = [HPr protein]-O-phospho-L-serine + ADP + H(+). It carries out the reaction [HPr protein]-O-phospho-L-serine + phosphate + H(+) = [HPr protein]-L-serine + diphosphate. Functionally, catalyzes the ATP- as well as the pyrophosphate-dependent phosphorylation of a specific serine residue in HPr, a phosphocarrier protein of the phosphoenolpyruvate-dependent sugar phosphotransferase system (PTS). HprK/P also catalyzes the pyrophosphate-producing, inorganic phosphate-dependent dephosphorylation (phosphorolysis) of seryl-phosphorylated HPr (P-Ser-HPr). The two antagonistic activities of HprK/P are regulated by several intracellular metabolites, which change their concentration in response to the absence or presence of rapidly metabolisable carbon sources (glucose, fructose, etc.) in the growth medium. Therefore, by controlling the phosphorylation state of HPr, HPrK/P is a sensor enzyme that plays a major role in the regulation of carbon metabolism and sugar transport: it mediates carbon catabolite repression (CCR), and regulates PTS-catalyzed carbohydrate uptake and inducer exclusion. This chain is HPr kinase/phosphorylase, found in Streptococcus pneumoniae serotype 2 (strain D39 / NCTC 7466).